A 523-amino-acid polypeptide reads, in one-letter code: MGEDFMHPPFQTYPSKNSEGKKHIVIVGGGIIGCCTAYYLTQHPSFSPSTHHITIIESRRIAGGASGKAGGLLASWAFPHQIVPLSFQLHQELSDEYDGENNWDYRRLTTVSLEADVREEVIENYERLSKKAYNLNVPPPKKRPGYISNKFNIGDSNSSLSSSGSSLKNDSASNEEEGSDIHVSSSVPSLHSLTNERMRSHTNSASDLDSVSPVEQLRETNIHNPLPADLDWIRRELVNDWSSLGGTDTTAQLHPYKFTHFILSKAMETGAVDLLLGKVVGLKCDEMDCVHSLKYLPSVVKNRRNSRGHAENPDIKLGTIFNDENAKPIEINDIQQIVLSMGPWTSKILKDCPISGLRAHSVTIKPSEKTVSPYAILAELKVNDREFFSPEMYARKDEVYVCGEGDTLVNIPESSDDVEVVSEKCDELYHYVSKLSPTLSKGHLLRKQACFLPVLNVPTSSGPLIGETNVKDLYIASGHSCWGINNAPATGKLMAEILLDGEATSAEISSLDPKLYFDATILS.

Low complexity predominate over residues 157-172 (NSSLSSSGSSLKNDSA). Residues 157–189 (NSSLSSSGSSLKNDSASNEEEGSDIHVSSSVPS) form a disordered region. S189, S204, and S306 each carry phosphoserine.

The protein belongs to the TDA3 family. In terms of assembly, interacts with BTN2.

The protein localises to the cytoplasm. Its subcellular location is the late endosome. Functionally, putative oxidoreductase that negatively regulates the retrieval of cargo from late endosomes to the Golgi. Regulates YIF1 and KEX2 localization. Required for fast DNA replication. This chain is Putative oxidoreductase TDA3 (TDA3), found in Saccharomyces cerevisiae (strain ATCC 204508 / S288c) (Baker's yeast).